We begin with the raw amino-acid sequence, 979 residues long: Translation initiation factor IF-2 (979 aa).

The segment covering 50 to 77 has biased composition (basic and acidic residues); it reads LKRSHGQSDDSARKKITLTKRETSEIRQ. The interval 50 to 385 is disordered; that stretch reads LKRSHGQSDD…GKHNADDARS (336 aa). A compositionally biased stretch (polar residues) spans 78–87; that stretch reads SDSTGKTRTV. Composition is skewed to basic and acidic residues over residues 98–109, 121–142, and 149–173; these read IKRDDVESHGDG, EEVR…RQEA, and EAAE…RRQA. A compositionally biased stretch (low complexity) spans 174-192; it reads ELLAQKAAEEAAAAQAAAD. Composition is skewed to basic and acidic residues over residues 196–211, 219–263, and 280–291; these read ETAR…RLAT, NADD…EAEA, and PSERKAEEKKAE. Residues 317–327 show a composition bias toward low complexity; it reads APAATTTTAAA. Over residues 351 to 368 the composition is skewed to gly residues; sequence GGGLKTRGDSSGGVGGWR. Residues 479–646 enclose the tr-type G domain; sequence PRPPVVTVMG…NVLLQAEVLE (168 aa). Residues 488–495 are G1; it reads GHVDHGKT. 488 to 495 serves as a coordination point for GTP; it reads GHVDHGKT. Residues 513–517 form a G2 region; sequence GITQH. The tract at residues 534–537 is G3; it reads DTPG. GTP-binding positions include 534-538 and 588-591; these read DTPGH and TKVD. The interval 588–591 is G4; the sequence is TKVD. Residues 624–626 form a G5 region; it reads SAK.

This sequence belongs to the TRAFAC class translation factor GTPase superfamily. Classic translation factor GTPase family. IF-2 subfamily.

The protein localises to the cytoplasm. Its function is as follows. One of the essential components for the initiation of protein synthesis. Protects formylmethionyl-tRNA from spontaneous hydrolysis and promotes its binding to the 30S ribosomal subunits. Also involved in the hydrolysis of GTP during the formation of the 70S ribosomal complex. In Cupriavidus metallidurans (strain ATCC 43123 / DSM 2839 / NBRC 102507 / CH34) (Ralstonia metallidurans), this protein is Translation initiation factor IF-2.